The chain runs to 248 residues: MSLYREVDAFRVDDERRRVPEKVVNDIEVRIRINGGMEQRFTASPQALEEFATGYLLGEGLVDSVDDIVSIEISDNIIDAEIESGDLDIRRELVMGSDCFGGWRQRVEMVGPVDSDLRVRADDIFLAFKRMVKSAVVWRMTGGTHVAALVTGDEFRVFEDVSRHVAVDKVIGSGAMDGVNFRESFIVYSGRMPADMLIKVVRAGVPIIASNAAPTSSGYDAAQRTGLTMLGFVRGKRFNIYSHPERII.

C99 functions as the Cysteine persulfide intermediate in the catalytic mechanism. 232–237 serves as a coordination point for Mo-bis(molybdopterin guanine dinucleotide); that stretch reads FVRGKR.

It belongs to the FdhD family.

Its subcellular location is the cytoplasm. Its function is as follows. Required for formate dehydrogenase (FDH) activity. Acts as a sulfur carrier protein that transfers sulfur from IscS to the molybdenum cofactor prior to its insertion into FDH. The chain is Sulfur carrier protein FdhD from Methanothermobacter thermautotrophicus (strain ATCC 29096 / DSM 1053 / JCM 10044 / NBRC 100330 / Delta H) (Methanobacterium thermoautotrophicum).